The chain runs to 292 residues: Nucleotide-binding protein SACE_2139 (292 aa).

ATP is bound at residue 15-22; it reads GLSGAGRS. 66–69 contributes to the GTP binding site; that stretch reads DVRS.

The protein belongs to the RapZ-like family.

Functionally, displays ATPase and GTPase activities. This Saccharopolyspora erythraea (strain ATCC 11635 / DSM 40517 / JCM 4748 / NBRC 13426 / NCIMB 8594 / NRRL 2338) protein is Nucleotide-binding protein SACE_2139.